The following is a 289-amino-acid chain: tRNA-cytidine(32) 2-sulfurtransferase (289 aa).

A PP-loop motif motif is present at residues 39 to 44 (SGGKDS). Positions 114, 117, and 205 each coordinate [4Fe-4S] cluster.

The protein belongs to the TtcA family. Homodimer. Mg(2+) is required as a cofactor. [4Fe-4S] cluster serves as cofactor.

Its subcellular location is the cytoplasm. It catalyses the reaction cytidine(32) in tRNA + S-sulfanyl-L-cysteinyl-[cysteine desulfurase] + AH2 + ATP = 2-thiocytidine(32) in tRNA + L-cysteinyl-[cysteine desulfurase] + A + AMP + diphosphate + H(+). The protein operates within tRNA modification. Its function is as follows. Catalyzes the ATP-dependent 2-thiolation of cytidine in position 32 of tRNA, to form 2-thiocytidine (s(2)C32). The sulfur atoms are provided by the cysteine/cysteine desulfurase (IscS) system. This Deinococcus geothermalis (strain DSM 11300 / CIP 105573 / AG-3a) protein is tRNA-cytidine(32) 2-sulfurtransferase.